Consider the following 328-residue polypeptide: Coiled-coil domain-containing protein 54 (328 aa).

Residues 122–151 adopt a coiled-coil conformation; that stretch reads TTKDILSMKEDIKALKKKVTELEKQNSYSR. T182 is subject to Phosphothreonine. Over residues 186 to 197 the composition is skewed to basic and acidic residues; it reads TDREMSSAEPEK. Positions 186 to 205 are disordered; the sequence is TDREMSSAEPEKVPSYPKST.

This Macaca fascicularis (Crab-eating macaque) protein is Coiled-coil domain-containing protein 54 (CCDC54).